Consider the following 902-residue polypeptide: Chloride channel protein 2 (902 aa).

Residues 1-89 (MAASAAAAGE…RCHKFLVSRV (89 aa)) lie on the Cytoplasmic side of the membrane. The essential for channel gating by both voltage and cell volume stretch occupies residues 18–36 (QYEQTLMYGRYTQELGAFA). At threonine 22 the chain carries Phosphothreonine. Residues 38 to 51 (EEAARIRLGGPEPW) form a modulates channel gating by both voltage and cell volume region. A run of 2 helical transmembrane segments spans residues 90 to 123 (GEDW…AQQW) and 132 to 157 (ILLQ…TQIL). The Selectivity filter part_1 signature appears at 163–167 (GSGIP). An intramembrane region (helical) is located at residues 166 to 173 (IPEMKTIL). Helical transmembrane passes span 182 to 200 (LTLK…ALGS) and 207 to 225 (EGPF…SKFL). The Selectivity filter part_2 motif lies at 205–209 (GKEGP). Intramembrane regions (helical) lie at residues 241 to 253 (MLAA…VGCC) and 257 to 265 (PIGGVLFSI). The next 5 helical transmembrane spans lie at 277-297 (YWRG…LAVW), 323-351 (LPAF…VQVM), 360-379 (FLMR…ISTL), 431-451 (ANVF…SALA), and 459-482 (GAFM…MAAW). Positions 459–463 (GAFMP) match the Selectivity filter part_3 motif. Residues 499–513 (GGYAVVGAAALAGAV) constitute an intramembrane region (helical). The note=Loop between two helices intramembrane region spans 514–515 (TH). The segment at residues 516-527 (TVSTAVIVFELT) is an intramembrane region (helical). Residues 528-532 (GQIAH) constitute an intramembrane region (note=Loop between two helices). Residues 533 to 550 (ILPVMIAVILANAVAQSL) form a helical membrane-spanning segment. Over 551-902 (QPSLYDSIIR…SPSDSDDKCQ (352 aa)) the chain is Cytoplasmic. Residues 586–644 (MVRDVPYVALNCTFRDLRLALHRTKGRMLALVESSESMILLGSIERSQVVTLLGAQLSA) enclose the CBS 1 domain. The disordered stretch occupies residues 648-748 (RQHIQERRKA…TSDLEKPESC (101 aa)). Composition is skewed to polar residues over residues 671–683 (PESS…NTED) and 706–719 (SNAS…TGSM). Residues 794–854 (IDPAPFQLVE…GSVTAQGVKV (61 aa)) enclose the CBS 2 domain. Residues 816 to 817 (LL) carry the Basolateral membrane sorting motif. The interval 860-902 (SFRDSATSSSDTETTEVHALWGPHSCHGLPRDGSPSDSDDKCQ) is disordered.

Belongs to the chloride channel (TC 2.A.49) family. ClC-2/CLCN2 subfamily. In terms of assembly, homodimer. Interacts with auxiliary subunit HEPACAM.

The protein resides in the cell membrane. The protein localises to the basolateral cell membrane. It localises to the cell projection. Its subcellular location is the dendritic spine membrane. It is found in the axon. The catalysed reaction is chloride(in) = chloride(out). The enzyme catalyses thiocyanate(in) = thiocyanate(out). It catalyses the reaction bromide(in) = bromide(out). It carries out the reaction nitrate(in) = nitrate(out). The catalysed reaction is iodide(out) = iodide(in). With respect to regulation, common gate kinetics are down-regulated by intracellular ATP. Inhibited by AK-42, a derivative of meclofenamate. Inhibited by Cd(2+). Inhibited by Zn(2+) and PKC activation. Inhibited at acidic pH. CCLN2:HEPACAM channel conductance is up-regulated upon hypo-osmolarity. Voltage-gated and osmosensitive chloride channel. Forms a homodimeric channel where each subunit has its own ion conduction pathway. Conducts double-barreled currents controlled by two types of gates, two fast glutamate gates that control each subunit independently and a slow common gate that opens and shuts off both subunits simultaneously. Displays inward rectification currents activated upon membrane hyperpolarization and extracellular hypotonicity. Contributes to chloride conductance involved in neuron excitability. In hippocampal neurons, generates a significant part of resting membrane conductance and provides an additional chloride efflux pathway to prevent chloride accumulation in dendrites upon GABA receptor activation. In glia, associates with the auxiliary subunit HEPACAM/GlialCAM at astrocytic processes and myelinated fiber tracts where it may regulate transcellular chloride flux buffering extracellular chloride and potassium concentrations. Regulates aldosterone production in adrenal glands. The opening of CLCN2 channels at hyperpolarized membrane potentials in the glomerulosa causes cell membrane depolarization, activation of voltage-gated calcium channels and increased expression of aldosterone synthase, the rate-limiting enzyme for aldosterone biosynthesis. Contributes to chloride conductance in retinal pigment epithelium involved in phagocytosis of shed photoreceptor outer segments and photoreceptor renewal. Conducts chloride currents at the basolateral membrane of epithelial cells with a role in chloride reabsorption rather than secretion. Permeable to small monovalent anions with chloride &gt; thiocyanate &gt; bromide &gt; nitrate &gt; iodide ion selectivity. The protein is Chloride channel protein 2 (CLCN2) of Cavia porcellus (Guinea pig).